We begin with the raw amino-acid sequence, 189 residues long: Glycerol-3-phosphate acyltransferase 1 (189 aa).

Helical transmembrane passes span 12 to 32 (MQFL…AYIV), 61 to 81 (GYFV…VSIA), 88 to 108 (FTFV…PMLF), 124 to 144 (IAFD…FYLI), and 164 to 184 (ILYS…VLIL).

Belongs to the PlsY family. Probably interacts with PlsX.

The protein localises to the cell membrane. The enzyme catalyses an acyl phosphate + sn-glycerol 3-phosphate = a 1-acyl-sn-glycero-3-phosphate + phosphate. Its pathway is lipid metabolism; phospholipid metabolism. In terms of biological role, catalyzes the transfer of an acyl group from acyl-phosphate (acyl-PO(4)) to glycerol-3-phosphate (G3P) to form lysophosphatidic acid (LPA). This enzyme utilizes acyl-phosphate as fatty acyl donor, but not acyl-CoA or acyl-ACP. In Bacillus anthracis, this protein is Glycerol-3-phosphate acyltransferase 1.